Reading from the N-terminus, the 271-residue chain is tRNA pseudouridine synthase A (271 aa).

Asp-52 (nucleophile) is an active-site residue. A substrate-binding site is contributed by Tyr-110.

The protein belongs to the tRNA pseudouridine synthase TruA family. As to quaternary structure, homodimer.

The catalysed reaction is uridine(38/39/40) in tRNA = pseudouridine(38/39/40) in tRNA. Formation of pseudouridine at positions 38, 39 and 40 in the anticodon stem and loop of transfer RNAs. In Maridesulfovibrio salexigens (strain ATCC 14822 / DSM 2638 / NCIMB 8403 / VKM B-1763) (Desulfovibrio salexigens), this protein is tRNA pseudouridine synthase A.